Consider the following 20-residue polypeptide: Phosphoglycerate kinase (20 aa).

Residues 1-20 (MNKKSIRNVNLKGKRVFDRV) form a disordered region.

It belongs to the phosphoglycerate kinase family. In terms of assembly, monomer.

It is found in the cytoplasm. It carries out the reaction (2R)-3-phosphoglycerate + ATP = (2R)-3-phospho-glyceroyl phosphate + ADP. Its pathway is carbohydrate degradation; glycolysis; pyruvate from D-glyceraldehyde 3-phosphate: step 2/5. The protein is Phosphoglycerate kinase of Bacillus cereus.